A 171-amino-acid polypeptide reads, in one-letter code: AN1-type zinc finger protein 2A (171 aa).

2 consecutive AN1-type zinc fingers follow at residues 4–52 (PDLG…KKDV) and 94–142 (KVFT…SSVS). Zn(2+)-binding residues include cysteine 10, cysteine 15, cysteine 25, cysteine 28, cysteine 33, histidine 36, histidine 42, cysteine 44, cysteine 100, cysteine 105, cysteine 115, cysteine 118, cysteine 123, histidine 126, histidine 132, and cysteine 134. A disordered region spans residues 135-171 (QAGSSSVSRGRSSASRAAEQKPSGVSWLAQRLRRTVK). Residues 136–151 (AGSSSVSRGRSSASRA) show a composition bias toward low complexity.

It localises to the cytoplasm. The protein localises to the nucleus. This Rattus norvegicus (Rat) protein is AN1-type zinc finger protein 2A (Zfand2a).